The sequence spans 581 residues: Frizzled-10 (581 aa).

An N-terminal signal peptide occupies residues 1–20; sequence MQRPGPRLWLVLQVMGSCAA. At 21–225 the chain is on the extracellular side; that stretch reads ISSMDMERPG…DVYWSREDKR (205 aa). In terms of domain architecture, FZ spans 29-150; that stretch reads PGDGKCQPIE…NDPNYLCMEA (122 aa). 5 cysteine pairs are disulfide-bonded: Cys34–Cys95, Cys42–Cys88, Cys79–Cys117, Cys106–Cys147, and Cys110–Cys134. N-linked (GlcNAc...) asparagine glycosylation occurs at Asn48. An N-linked (GlcNAc...) asparagine glycan is attached at Asn153. The chain crosses the membrane as a helical span at residues 226–246; it reads FAVVWLAIWAVLCFFSSAFTV. Residues 247–262 lie on the Cytoplasmic side of the membrane; that stretch reads LTFLIDPARFRYPERP. A helical transmembrane segment spans residues 263–283; it reads IIFLSMCYCVYSVGYLIRLFA. Topologically, residues 284–311 are extracellular; sequence GAESIACDRDSGQLYVIQEGLESTGCTL. A helical membrane pass occupies residues 312–332; it reads VFLVLYYFGMASSLWWVVLTL. Over 333 to 351 the chain is Cytoplasmic; sequence TWFLAAGKKWGHEAIEANS. The chain crosses the membrane as a helical span at residues 352-372; sequence SYFHLAAWAIPAVKTILILVM. The Extracellular segment spans residues 373–393; it reads RRVAGDELTGVCYVGSMDVNA. The helical transmembrane segment at 394–414 threads the bilayer; sequence LTGFVLIPLACYLVIGTSFIL. Over 415–443 the chain is Cytoplasmic; that stretch reads SGFVALFHIRRVMKTGGENTDKLEKLMVR. Residues 444 to 464 traverse the membrane as a helical segment; it reads IGLFSVLYTVPATCVIACYFY. Over 465–502 the chain is Extracellular; that stretch reads ERLNMDYWKILAAQHKCKMNNQTKTLDCLMAASIPAVE. Residue Asn485 is glycosylated (N-linked (GlcNAc...) asparagine). Residues 503–523 traverse the membrane as a helical segment; that stretch reads IFMVKIFMLLVVGITSGMWIW. Over 524-581 the chain is Cytoplasmic; the sequence is TSKTLQSWQQVCSRRLKKKSRRKPASVITSGGIYKKAQHPQKTHHGKYEIPAQSPTCV. Residues 526–531 carry the Lys-Thr-X-X-X-Trp motif, mediates interaction with the PDZ domain of Dvl family members motif; the sequence is KTLQSW. Residues 560 to 581 form a disordered region; that stretch reads AQHPQKTHHGKYEIPAQSPTCV. Positions 579 to 581 match the PDZ-binding motif; the sequence is TCV.

Belongs to the G-protein coupled receptor Fz/Smo family. As to quaternary structure, interacts with WNT7B. Interacts with MYOC. In terms of processing, ubiquitinated by ZNRF3, leading to its degradation by the proteasome. In terms of tissue distribution, highest levels in the placenta and fetal kidney, followed by fetal lung and brain. In adult brain, abundantly expressed in the cerebellum, followed by cerebral cortex, medulla and spinal cord; very low levels in total brain, frontal lobe, temporal lobe and putamen. Weak expression detected in adult brain, heart, lung, skeletal muscle, pancreas, spleen and prostate.

The protein localises to the cell membrane. Its function is as follows. Receptor for Wnt proteins. Functions in the canonical Wnt/beta-catenin signaling pathway. The canonical Wnt/beta-catenin signaling pathway leads to the activation of disheveled proteins, inhibition of GSK-3 kinase, nuclear accumulation of beta-catenin and activation of Wnt target genes. A second signaling pathway involving PKC and calcium fluxes has been seen for some family members, but it is not yet clear if it represents a distinct pathway or if it can be integrated in the canonical pathway, as PKC seems to be required for Wnt-mediated inactivation of GSK-3 kinase. Both pathways seem to involve interactions with G-proteins. May be involved in transduction and intercellular transmission of polarity information during tissue morphogenesis and/or in differentiated tissues. The chain is Frizzled-10 (FZD10) from Homo sapiens (Human).